A 504-amino-acid chain; its full sequence is Arrestin-related trafficking adapter 10 (504 aa).

This sequence belongs to the ART10 family.

It localises to the cytoplasm. Functionally, may regulate endocytosis by recruiting RSP5 ubiquitin ligase activity to specific plasma membrane proteins in response to extracellular stimuli. The sequence is that of Arrestin-related trafficking adapter 10 (ART10) from Candida glabrata (strain ATCC 2001 / BCRC 20586 / JCM 3761 / NBRC 0622 / NRRL Y-65 / CBS 138) (Yeast).